Reading from the N-terminus, the 692-residue chain is Elongation factor G (692 aa).

In terms of domain architecture, tr-type G spans 8 to 283 (KNTRNIGIMA…AVLDYLPSPV (276 aa)). Residues 17–24 (AHIDAGKT), 81–85 (DTPGH), and 135–138 (NKMD) contribute to the GTP site.

Belongs to the TRAFAC class translation factor GTPase superfamily. Classic translation factor GTPase family. EF-G/EF-2 subfamily.

Its subcellular location is the cytoplasm. Catalyzes the GTP-dependent ribosomal translocation step during translation elongation. During this step, the ribosome changes from the pre-translocational (PRE) to the post-translocational (POST) state as the newly formed A-site-bound peptidyl-tRNA and P-site-bound deacylated tRNA move to the P and E sites, respectively. Catalyzes the coordinated movement of the two tRNA molecules, the mRNA and conformational changes in the ribosome. The chain is Elongation factor G from Exiguobacterium sibiricum (strain DSM 17290 / CCUG 55495 / CIP 109462 / JCM 13490 / 255-15).